Consider the following 331-residue polypeptide: Cytosolic 5'-nucleotidase 3A (331 aa).

Asp-83 acts as the Nucleophile in catalysis. Asp-83 and Asp-85 together coordinate Mg(2+). The active-site Proton donor is Asp-85. Glu-130 provides a ligand contact to CMP. Residues Glu-130 and Ser-151 each contribute to the N(7)-methyl-GMP site. Substrate-binding positions include 198–200 (SAG) and Lys-247. A Mg(2+)-binding site is contributed by Asp-272. Residue Ser-273 is modified to Phosphoserine.

This sequence belongs to the pyrimidine 5'-nucleotidase family. Monomer. In terms of tissue distribution, isoform 2 is highly expressed in the brain, heart, spleen, kidney and blood. Isoform 2 is expressed (at protein level) in the spleen, skeletal muscle and gastrointestinal epithelia.

Its subcellular location is the cytoplasm. It carries out the reaction N(7)-methyl-GMP + H2O = N(7)-methylguanosine + phosphate. The catalysed reaction is a ribonucleoside 5'-phosphate + H2O = a ribonucleoside + phosphate. Nucleotidase which shows specific activity towards cytidine monophosphate (CMP) and 7-methylguanosine monophosphate (m(7)GMP). CMP seems to be the preferred substrate. This is Cytosolic 5'-nucleotidase 3A (Nt5c3a) from Mus musculus (Mouse).